We begin with the raw amino-acid sequence, 890 residues long: Receptor like protein 23 (890 aa).

An N-terminal signal peptide occupies residues 1-22 (MSKALLHLHFLSLFLLCCVCHS). Topologically, residues 23–850 (SIFTLNFHFT…EEEEEVLNGR (828 aa)) are extracellular. N-linked (GlcNAc...) asparagine glycans are attached at residues Asn58, Asn70, Asn91, Asn109, and Asn145. 27 LRR repeats span residues 97-121 (FHQLRYVDLQNNNLTSSSLPSGFGN), 123-145 (KRLEGLFLSSNGFLGQVPSSFSN), 146-171 (LTMLAQLDLSYNKLTGSFPLVRGLRK), 173-195 (IVLDLSYNHFSGTLNPNSSLFEL), 196-218 (HQLRYLNLAFNNFSSSLPSKFGN), 220-243 (HRLENLILSSNGFSGQVPSTISNL), 244-268 (TRLTKLYLDQNKLTSSFPLVQNLTN), 270-290 (YELDLSYNKFFGVIPSSLLTL), 291-316 (PFLAHLALRENNLAGSVEVSNSSTSS), 318-339 (LEIMYLGSNHFEGQILEPISKL), 340-363 (INLKHLDLSFLNTSYPIDLKLFSS), 364-389 (LKSLRSLDLSGNSISSASLSSDSYIP), 391-411 (TLEMLTLRHCDINEFPNILKT), 412-436 (LKELVYIDISNNRMKGKIPEWLWSL), 438-461 (LLQSVTLGNNYFTGFQGSAEILVN), 462-485 (SSVLLLYLDSNNFEGALPDLPLSI), 487-506 (GFGVASNSFTSEIPLSICNR), 507-527 (SSLAAIDLSYNNFTGPIPPCL), 528-551 (RNLELVYLRNNNLEGSIPDALCDG), 553-575 (SLRTLDVSHNRLTGKLPRSFVNC), 577-598 (SLKFLSVINNRIEDTFPFWLKA), 599-623 (LPNLQVLTLRSNRFYGPISPPHQGP), 626-650 (FPELRIFEISDNKFTGSLPPNYFVN), 699-724 (LTSYAAIDFSGNRLEGQIPESIGLLK), 726-747 (LIAVNISNNAFTGHIPLSMANL), 748-771 (ENLESLDMSRNQLSGTIPNGLGSI), and 773-796 (FLAYINVSHNQLTGEIPQGTQITG). Asn189, Asn207, Asn242, and Asn265 each carry an N-linked (GlcNAc...) asparagine glycan. A glycan (N-linked (GlcNAc...) asparagine) is linked at Asn311. N-linked (GlcNAc...) asparagine glycosylation is present at Asn351. Asn461 carries N-linked (GlcNAc...) asparagine glycosylation. Asn505 and Asn518 each carry an N-linked (GlcNAc...) asparagine glycan. Asn574 carries an N-linked (GlcNAc...) asparagine glycan. The N-linked (GlcNAc...) asparagine glycan is linked to Asn730. N-linked (GlcNAc...) asparagine glycosylation occurs at Asn778. Residues 851–871 (AVAIGYGSGLLLGLAIAQVIA) form a helical membrane-spanning segment. Residues 872–890 (SYKPEWLVKIIGLNKRRKR) lie on the Cytoplasmic side of the membrane.

This sequence belongs to the RLP family. In terms of assembly, directly interacts with a 20-mer fragment (nlp20) from NLPs through its extracellular LRR domain. Component of a trimeric complex composed of RLP23, SOBIR1 and BAK1. BAK1 is recruited into a pre-formed RLP23-SOBIR1 complex in a ligand-dependent manner. Interacts with SOBIR1.

It is found in the cell membrane. Its function is as follows. Involved in the perception of necrosis and ethylene-inducing peptide 1-like proteins (NLPs), that act as extracellular signals mediating immune activation. Component of the RLP23-SOBIR1-BAK1 complex that mediates NLP-triggered immunity. The protein is Receptor like protein 23 of Arabidopsis thaliana (Mouse-ear cress).